The sequence spans 550 residues: DNA mismatch repair protein MutL (550 aa).

The protein belongs to the DNA mismatch repair MutL/HexB family.

Its function is as follows. This protein is involved in the repair of mismatches in DNA. It is required for dam-dependent methyl-directed DNA mismatch repair. May act as a 'molecular matchmaker', a protein that promotes the formation of a stable complex between two or more DNA-binding proteins in an ATP-dependent manner without itself being part of a final effector complex. The polypeptide is DNA mismatch repair protein MutL (Microcystis aeruginosa (strain NIES-843 / IAM M-2473)).